We begin with the raw amino-acid sequence, 512 residues long: MKIRSQVGMVLNLDKCIGCHTCSVTCKNVWTSREGVEYAWFNNVETKPGQGFPTDWENQEKYKGGWIRKINGKLQPRMGNRAMLLGKIFANPHLPGIDDYYEPFDFDYQNLHTAPEGSKSQPIARPRSLITGERMAKIEKGPNWEDDLGGEFDKLAKDKNFDNIQKAMYSQFENTFMMYLPRLCEHCLNPACVATCPSGAIYKREEDGIVLIDQDKCRGWRMCITGCPYKKIYFNWKSGKSEKCIFCYPRIEAGQPTVCSETCVGRIRYLGVLLYDADAIERAASTENEKDLYQRQLDVFLDPNDPKVIEQAIKDGIPLSVIEAAQQSPVYKMAMEWKLALPLHPEYRTLPMVWYVPPLSPIQSAADAGELGSNGILPDVESLRIPVQYLANLLTAGDTKPVLRALKRMLAMRHYKRAETVDGKVDTRALEEVGLTEAQAQEMYRYLAIANYEDRFVVPSSHRELAREAFPEKNGCGFTFGDGCHGSDTKFNLFNSRRIDAIDVTSKTEPHP.

3 consecutive 4Fe-4S ferredoxin-type domains span residues 7-35 (VGMV…SREG), 175-206 (TFMM…KREE), and 208-237 (GIVL…FNWK). The [4Fe-4S] cluster site is built by Cys16, Cys19, Cys22, Cys26, Cys184, Cys187, and Cys192. Residues Cys196, Cys217, and Cys223 each coordinate [3Fe-4S] cluster. [4Fe-4S] cluster-binding residues include Cys227, Cys244, Cys247, Cys259, and Cys263.

In terms of assembly, dimer of heterotrimers each composed of an alpha, a beta and a gamma chain. Alpha and beta are catalytic chains; gamma chains are involved in binding the enzyme complex to the cytoplasmic membrane. The cofactor is [4Fe-4S] cluster. Requires [3Fe-4S] cluster as cofactor.

It is found in the cell membrane. The enzyme catalyses nitrate + a quinol = a quinone + nitrite + H2O. The nitrate reductase enzyme complex allows E.coli to use nitrate as an electron acceptor during anaerobic growth. The beta chain is an electron transfer unit containing four cysteine clusters involved in the formation of iron-sulfur centers. Electrons are transferred from the gamma chain to the molybdenum cofactor of the alpha subunit. This is Respiratory nitrate reductase 1 beta chain (narH) from Escherichia coli (strain K12).